We begin with the raw amino-acid sequence, 494 residues long: Alpha-amylase-related protein (494 aa).

The signal sequence occupies residues 1 to 20 (MIKFALALTLCLAGASLSLA). At Gln-21 the chain carries Pyrrolidone carboxylic acid. An intrachain disulfide couples Cys-48 to Cys-104. Ca(2+)-binding residues include Asn-118, Gln-169, and Asp-178. An intrachain disulfide couples Cys-157 to Cys-171. Arg-206 provides a ligand contact to chloride. Catalysis depends on Asp-208, which acts as the Nucleophile. A Ca(2+)-binding site is contributed by His-212. The active-site Proton donor is Glu-245. Asn-308 and Arg-343 together coordinate chloride. 3 disulfide bridges follow: Cys-376–Cys-382, Cys-418–Cys-441, and Cys-448–Cys-460.

The protein belongs to the glycosyl hydrolase 13 family. As to quaternary structure, monomer. Ca(2+) is required as a cofactor. Requires chloride as cofactor.

It is found in the secreted. It catalyses the reaction Endohydrolysis of (1-&gt;4)-alpha-D-glucosidic linkages in polysaccharides containing three or more (1-&gt;4)-alpha-linked D-glucose units.. This Drosophila bocqueti (Fruit fly) protein is Alpha-amylase-related protein (Amyrel).